We begin with the raw amino-acid sequence, 209 residues long: Small ribosomal subunit protein uS3 (209 aa).

The KH type-2 domain maps to 38–107 (IRKFIKNRYY…RVVINIEEIK (70 aa)).

It belongs to the universal ribosomal protein uS3 family. In terms of assembly, part of the 30S ribosomal subunit. Forms a tight complex with proteins S10 and S14.

Functionally, binds the lower part of the 30S subunit head. Binds mRNA in the 70S ribosome, positioning it for translation. The chain is Small ribosomal subunit protein uS3 from Thermotoga petrophila (strain ATCC BAA-488 / DSM 13995 / JCM 10881 / RKU-1).